Reading from the N-terminus, the 919-residue chain is GPI ethanolamine phosphate transferase 1 (919 aa).

The Cytoplasmic portion of the chain corresponds to 1-8 (MWSRHRLY). The chain crosses the membrane as a helical span at residues 9–29 (FIVAGVLFHLFYLWSIFDIYF). Residues 30–456 (VSPLVHGMKQ…TTYNWRFIRT (427 aa)) lie on the Lumenal side of the membrane. N-linked (GlcNAc...) asparagine glycosylation is found at asparagine 138, asparagine 196, asparagine 201, asparagine 285, and asparagine 311. The chain crosses the membrane as a helical span at residues 457–477 (IVTLGFLGWIVYSFSIFLRLF). Residues 478–487 (ILNRDYNSHK) are Cytoplasmic-facing. A helical transmembrane segment spans residues 488 to 508 (SLLNYFIFGSLTIILNYVLYY). Over 509–510 (QK) the chain is Lumenal. Residues 511–531 (APFNYYMYLFFPLIFWSEIFT) traverse the membrane as a helical segment. The Cytoplasmic portion of the chain corresponds to 532-558 (DRVVLDDGVKEFLKGISIPKRIILVSA). The chain crosses the membrane as a helical span at residues 559–579 (IILVYESIVYAFFDRWIFSLI). Residues 580 to 598 (FNMLSFYPLICGYRDWKRN) are Lumenal-facing. A helical membrane pass occupies residues 599-619 (TLWFITGAAISVFTLLDAVKI). Residue glutamate 620 is a topological domain, cytoplasmic. The chain crosses the membrane as a helical span at residues 621-641 (SLTQINIASGLIVLTALSGFL). Residues 642-653 (HLRKQLNSYTTT) are Lumenal-facing. The helical transmembrane segment at 654–674 (VFICQILLVILMVLATNKSIV) threads the bilayer. The Cytoplasmic segment spans residues 675 to 686 (SLQNRTGLPRDA). A helical transmembrane segment spans residues 687-707 (QVAGWVILVVSLLLMPLIHYM). Residues 708 to 718 (KPNNNYKVRML) lie on the Lumenal side of the membrane. A helical transmembrane segment spans residues 719–739 (IIFLTFAPTFIILTISFESFF). Topologically, residues 740-773 (YLVFSAYIVQWIEIESKLKEQTPNTSHYKQLIRV) are cytoplasmic. A helical membrane pass occupies residues 774-794 (TIIGFFLLQNAFFGTGNVASI). At 795-815 (SSFSLDSVYRLMPIFDPFPMG) the chain is on the lumenal side. The helical transmembrane segment at 816–836 (ALLVIKLIIPYIILSAGLGIL) threads the bilayer. The Cytoplasmic segment spans residues 837 to 845 (NLKLHIKDY). Residues 846–866 (TISTLIISTSDILSLNFFYLL) traverse the membrane as a helical segment. Residues 867–882 (KTEGSWLDIGITISNY) are Lumenal-facing. Residues 883 to 903 (CLAILSSLFMLILEIVAHVVL) form a helical membrane-spanning segment. The Cytoplasmic segment spans residues 904–919 (KNVQLSKPVIASKKTN).

This sequence belongs to the PIGG/PIGN/PIGO family. PIGN subfamily.

It is found in the endoplasmic reticulum membrane. It participates in glycolipid biosynthesis; glycosylphosphatidylinositol-anchor biosynthesis. In terms of biological role, ethanolamine phosphate transferase involved in glycosylphosphatidylinositol-anchor biosynthesis. Transfers ethanolamine phosphate to the first alpha-1,4-linked mannose of the glycosylphosphatidylinositol precursor of GPI-anchor. The polypeptide is GPI ethanolamine phosphate transferase 1 (MCD4) (Kluyveromyces lactis (strain ATCC 8585 / CBS 2359 / DSM 70799 / NBRC 1267 / NRRL Y-1140 / WM37) (Yeast)).